We begin with the raw amino-acid sequence, 376 residues long: Cyclin-D3-1 (376 aa).

Residues 298 to 376 form a disordered region; the sequence is KRKSHDSSSS…HLPWAIVATP (79 aa). The segment covering 321 to 349 has biased composition (low complexity); the sequence is NSDESSNDSWSASSCNPPTSSSSPQQQPP. A compositionally biased stretch (basic and acidic residues) spans 354 to 363; the sequence is RGAEENEKKK.

The protein belongs to the cyclin family. Cyclin D subfamily. As to quaternary structure, interacts with the C-terminal domain of CDKA-1. Interacts with KRP1/ICK1. Interacts with KRP6. In terms of processing, phosphorylated. In terms of tissue distribution, highly expressed in roots and at lower levels in leaves and flowers. Expressed in vegetative shoot meristem and inflorescence.

In terms of biological role, involved in the control of the cell cycle at the G1/S (start) transition. Activates the G1/S phase transition in response to cytokinin hormone signal, but declines in response to sucrose starvation leading to G1 arrest. Involved in the induction of mitotic cell division. Plays an important role in the switch from cell proliferation to the final stages of differentiation during plant development. May not be involved in the activation of cell cycle in the root apical meristem (RAM) in the early phase of seed germination. Promotes divisions in the guard cells (GCs) after the guard mother cells (GMC) symmetric division. This Arabidopsis thaliana (Mouse-ear cress) protein is Cyclin-D3-1 (CYCD3-1).